The sequence spans 158 residues: Protein OPG060 (158 aa).

This sequence belongs to the orthopoxvirus OPG058 family.

In Homo sapiens (Human), this protein is Protein OPG060 (OPG060).